The chain runs to 469 residues: Glutamate--tRNA ligase (469 aa).

The 'HIGH' region signature appears at 11–21 (PSPTGFIHLGN). Basic and acidic residues predominate over residues 118-131 (GEKPRYDGTWRPEP). A disordered region spans residues 118 to 139 (GEKPRYDGTWRPEPGKVLPEPP). Residues 243 to 247 (KMSKR) carry the 'KMSKS' region motif. Lysine 246 contacts ATP.

It belongs to the class-I aminoacyl-tRNA synthetase family. Glutamate--tRNA ligase type 1 subfamily. In terms of assembly, monomer.

The protein resides in the cytoplasm. The catalysed reaction is tRNA(Glu) + L-glutamate + ATP = L-glutamyl-tRNA(Glu) + AMP + diphosphate. Its function is as follows. Catalyzes the attachment of glutamate to tRNA(Glu) in a two-step reaction: glutamate is first activated by ATP to form Glu-AMP and then transferred to the acceptor end of tRNA(Glu). This chain is Glutamate--tRNA ligase, found in Burkholderia pseudomallei (strain 1106a).